The following is a 309-amino-acid chain: MSIRIIPQDELGSSEKRTADMIPPLLFPRLKNLYNRRAERLRELAENNPLDDYLRFAALIAHAQEVVLYDHPLEMDLTARIKEASAQGKPPLDIHVLPRDKHWQKLLMALIAELKPEMSGPALAVIENLEKASTQELEDMASALFASDFSSVSSDKAPFIWAALSLYWAQMANLIPGKARAEYGEQRQYCPVCGSMPVSSMVQIGTTQGLRYLHCNLCETEWHVVRVKCSNCEQSGKLHYWSLDDEQAAIKAESCDDCGTYLKILYQEKEPKVEAVADDLASLVLDARMEQEGYARSSINPFLFPGEGE.

This sequence belongs to the FdhE family.

Its subcellular location is the cytoplasm. Its function is as follows. Necessary for formate dehydrogenase activity. This is Protein FdhE from Shigella boydii serotype 18 (strain CDC 3083-94 / BS512).